A 441-amino-acid chain; its full sequence is L-seryl-tRNA(Sec) selenium transferase (441 aa).

Residue lysine 283 is modified to N6-(pyridoxal phosphate)lysine.

It belongs to the SelA family. It depends on pyridoxal 5'-phosphate as a cofactor.

It is found in the cytoplasm. It catalyses the reaction L-seryl-tRNA(Sec) + selenophosphate + H(+) = L-selenocysteinyl-tRNA(Sec) + phosphate. It functions in the pathway aminoacyl-tRNA biosynthesis; selenocysteinyl-tRNA(Sec) biosynthesis; selenocysteinyl-tRNA(Sec) from L-seryl-tRNA(Sec) (bacterial route): step 1/1. In terms of biological role, converts seryl-tRNA(Sec) to selenocysteinyl-tRNA(Sec) required for selenoprotein biosynthesis. The polypeptide is L-seryl-tRNA(Sec) selenium transferase (Campylobacter concisus (strain 13826)).